A 205-amino-acid polypeptide reads, in one-letter code: Outer-membrane lipoprotein carrier protein (205 aa).

An N-terminal signal peptide occupies residues 1–19 (MKKIIICFIFVFSINISFA).

It belongs to the LolA family. In terms of assembly, monomer.

The protein localises to the periplasm. Functionally, participates in the translocation of lipoproteins from the inner membrane to the outer membrane. Only forms a complex with a lipoprotein if the residue after the N-terminal Cys is not an aspartate (The Asp acts as a targeting signal to indicate that the lipoprotein should stay in the inner membrane). This chain is Outer-membrane lipoprotein carrier protein, found in Francisella tularensis subsp. novicida (strain U112).